The primary structure comprises 942 residues: Leucine--tRNA ligase (942 aa).

Positions 41–51 match the 'HIGH' region motif; the sequence is PYLNGVLHAGH. The short motif at 633–637 is the 'KMSKS' region element; sequence KLSKS. K636 is an ATP binding site.

The protein belongs to the class-I aminoacyl-tRNA synthetase family.

It localises to the cytoplasm. It carries out the reaction tRNA(Leu) + L-leucine + ATP = L-leucyl-tRNA(Leu) + AMP + diphosphate. The polypeptide is Leucine--tRNA ligase (Methanocaldococcus jannaschii (strain ATCC 43067 / DSM 2661 / JAL-1 / JCM 10045 / NBRC 100440) (Methanococcus jannaschii)).